The sequence spans 170 residues: Large ribosomal subunit protein uL10 (170 aa).

This sequence belongs to the universal ribosomal protein uL10 family. Part of the ribosomal stalk of the 50S ribosomal subunit. The N-terminus interacts with L11 and the large rRNA to form the base of the stalk. The C-terminus forms an elongated spine to which L12 dimers bind in a sequential fashion forming a multimeric L10(L12)X complex.

Its function is as follows. Forms part of the ribosomal stalk, playing a central role in the interaction of the ribosome with GTP-bound translation factors. The chain is Large ribosomal subunit protein uL10 from Lactobacillus acidophilus (strain ATCC 700396 / NCK56 / N2 / NCFM).